Consider the following 179-residue polypeptide: MNRLKEKYTKEVVPALMSKFNYKSIMQVPKIEKIVINMGVGDAVQNPKALDSAVEELTLIAGQRPVVTRAKKSIAGFRLRQGMPIGAKVTLRGERMYEFLDKLISVSLPRVRDFRGVSKKAFDGRGNYTLGIKEQLIFPEIDYDKVNKVRGMDIVIVTTANTDEEARELLTLLGMPFQK.

This sequence belongs to the universal ribosomal protein uL5 family. Part of the 50S ribosomal subunit; part of the 5S rRNA/L5/L18/L25 subcomplex. Contacts the 5S rRNA and the P site tRNA. Forms a bridge to the 30S subunit in the 70S ribosome.

Functionally, this is one of the proteins that bind and probably mediate the attachment of the 5S RNA into the large ribosomal subunit, where it forms part of the central protuberance. In the 70S ribosome it contacts protein S13 of the 30S subunit (bridge B1b), connecting the 2 subunits; this bridge is implicated in subunit movement. Contacts the P site tRNA; the 5S rRNA and some of its associated proteins might help stabilize positioning of ribosome-bound tRNAs. The sequence is that of Large ribosomal subunit protein uL5 from Geobacillus thermodenitrificans (strain NG80-2).